Here is a 1687-residue protein sequence, read N- to C-terminus: Zinc finger protein 142 (1687 aa).

Disordered stretches follow at residues 1-23 (MTDPLLDSQPASSTGEMDGLCPE) and 83-150 (TLTP…RLEG). Residues 125-140 (KEEKSDTQKDSQKAVD) show a composition bias toward basic and acidic residues. A Phosphoserine modification is found at Ser-154. 3 C2H2-type zinc fingers span residues 163–185 (HMCPECKRCFKKRTHLVEHLHLH), 219–242 (HHCPLCHYSAVERNALNRHMASMH), and 253–275 (YACPVCREEFRLSQALKEHLKSH). The C2H2-type 4; atypical zinc finger occupies 286 to 311 (LRCFQEGCSYAAPDRKAFIKHLKETH). C2H2-type zinc fingers lie at residues 316-340 (VECRHHSCPMLFATAEAMEAHHKSH), 343-366 (FHCPHCDFACSNKHLFRKHKKQGH), 372-395 (LRCTFCPFATFNPVAYQDHVGKMH), 401-423 (HQCPECNFATAHKRVLIRHMLLH), 429-451 (HKCELCDFTCRDVSYLSKHMLTH), 457-479 (YMCTECGYVTKWKHYLRVHMRKH), 485-507 (YQCNQCSYRCHRADQLSSHKLRH), 512-536 (LMCEVCAFACKRKYELQKHMASQHH), 544-567 (YPCHYCSYQSRHKQAVLSHENCKH), and 573-596 (FHCALCDYRTFSNTTLLFHKRKAH). Residue Lys-594 forms a Glycyl lysine isopeptide (Lys-Gly) (interchain with G-Cter in SUMO2) linkage. 5 disordered regions span residues 613-690 (EPEG…EVEE), 704-798 (LESV…PPLP), 897-935 (KGLPRPDSPIPLQPVLPGTQASEDTESGKPPPASQEAEL), 947-1014 (REPE…SPTE), and 1052-1092 (GRGG…GDGD). Residues 725-739 (PLGLEGPDGLEGPEL) are compositionally biased toward low complexity. The segment covering 1061-1075 (TPQTQPDVSPLSNGD) has biased composition (polar residues). Residues 1082 to 1092 (GSTESSSGDGD) are compositionally biased toward low complexity. 15 C2H2-type zinc fingers span residues 1135 to 1158 (LHCSLCPFTAPAATALRLHQKRRH), 1171 to 1194 (LQCGDCGFTCKQSRCMQQHRRLKH), 1200 to 1222 (HQCPFCDFSTTRRYRLEAHQSRH), 1228 to 1251 (IPCSSCPQTFGTNSKLRLHRLRVH), 1257 to 1280 (HFCPLCDYSGYLRHDITRHVNSCH), 1286 to 1309 (FACSQCEAQFSSETALKQHALRRH), 1328 to 1351 (LHCSRCGLLCPSPASLRGHTRKQH), 1354 to 1377 (LECGACQEAFPSRLALDEHRRQQH), 1380 to 1403 (HRCQLCDFAARERVGLVKHYLEQH), 1424 to 1446 (LHCPFCDFTCRHQLVLDHHVKGH), 1452 to 1474 (YKCTDCAYSTKNRQKITWHSRIH), 1480 to 1502 (YHCHLCPYACADPSRLKYHMRIH), 1508 to 1530 (YLCPECGYKCKWVNQLKYHMTKH), 1536 to 1559 (YQCPECEYCTNRADALRVHQETRH), and 1565 to 1587 (FMCEQCGKAFKTRFLLRTHLRKH). Residue Lys-1193 forms a Glycyl lysine isopeptide (Lys-Gly) (interchain with G-Cter in SUMO2) linkage. Residue Lys-1242 forms a Glycyl lysine isopeptide (Lys-Gly) (interchain with G-Cter in SUMO2) linkage. Residue Lys-1591 forms a Glycyl lysine isopeptide (Lys-Gly) (interchain with G-Cter in SUMO2) linkage. C2H2-type zinc fingers lie at residues 1593 to 1615 (YVCNVCHRAFRWAAGLRHHALTH) and 1621 to 1643 (FFCRLCNYKAKQKFQVVKHVRRH). The disordered stretch occupies residues 1638-1687 (KHVRRHHPDQADPNQGVGKDPTTPTVHLHDVQLEDPSPPAPAAPHTGPEG).

This sequence belongs to the krueppel C2H2-type zinc-finger protein family.

The protein localises to the nucleus. Functionally, may be involved in transcriptional regulation. In Homo sapiens (Human), this protein is Zinc finger protein 142.